Reading from the N-terminus, the 419-residue chain is UDP-N-acetylglucosamine 1-carboxyvinyltransferase (419 aa).

22-23 (KN) serves as a coordination point for phosphoenolpyruvate. Residue Arg-92 coordinates UDP-N-acetyl-alpha-D-glucosamine. Cys-116 acts as the Proton donor in catalysis. Cys-116 carries the 2-(S-cysteinyl)pyruvic acid O-phosphothioketal modification. Residues 121–125 (RPIDQ), Asp-305, and Ile-327 each bind UDP-N-acetyl-alpha-D-glucosamine.

The protein belongs to the EPSP synthase family. MurA subfamily.

It localises to the cytoplasm. The enzyme catalyses phosphoenolpyruvate + UDP-N-acetyl-alpha-D-glucosamine = UDP-N-acetyl-3-O-(1-carboxyvinyl)-alpha-D-glucosamine + phosphate. The protein operates within cell wall biogenesis; peptidoglycan biosynthesis. Cell wall formation. Adds enolpyruvyl to UDP-N-acetylglucosamine. The chain is UDP-N-acetylglucosamine 1-carboxyvinyltransferase from Trichlorobacter lovleyi (strain ATCC BAA-1151 / DSM 17278 / SZ) (Geobacter lovleyi).